Reading from the N-terminus, the 427-residue chain is Glutamate-1-semialdehyde 2,1-aminomutase (427 aa).

Residue Lys265 is modified to N6-(pyridoxal phosphate)lysine.

The protein belongs to the class-III pyridoxal-phosphate-dependent aminotransferase family. HemL subfamily. Homodimer. Pyridoxal 5'-phosphate serves as cofactor.

The protein resides in the cytoplasm. It carries out the reaction (S)-4-amino-5-oxopentanoate = 5-aminolevulinate. It functions in the pathway porphyrin-containing compound metabolism; protoporphyrin-IX biosynthesis; 5-aminolevulinate from L-glutamyl-tRNA(Glu): step 2/2. The polypeptide is Glutamate-1-semialdehyde 2,1-aminomutase (Bordetella parapertussis (strain 12822 / ATCC BAA-587 / NCTC 13253)).